The sequence spans 460 residues: 1-aminocyclopropane-1-carboxylate synthase 11 (460 aa).

The substrate site is built by E45 and Y83. Position 267 is an N6-(pyridoxal phosphate)lysine (K267).

The protein belongs to the class-I pyridoxal-phosphate-dependent aminotransferase family. As to quaternary structure, homodimer and heterodimer. In vivo, the relevance of heterodimerization with other ACS enzymes is however unsure. Interacts with GRF3. Pyridoxal 5'-phosphate is required as a cofactor. May be processed at its C-terminus. As to expression, expressed in roots.

It carries out the reaction S-adenosyl-L-methionine = 1-aminocyclopropane-1-carboxylate + S-methyl-5'-thioadenosine + H(+). The protein operates within alkene biosynthesis; ethylene biosynthesis via S-adenosyl-L-methionine; ethylene from S-adenosyl-L-methionine: step 1/2. In terms of biological role, 1-aminocyclopropane-1-carboxylate synthase (ACS) enzymes catalyze the conversion of S-adenosyl-L-methionine (SAM) into 1-aminocyclopropane-1-carboxylate (ACC), a direct precursor of ethylene. This Arabidopsis thaliana (Mouse-ear cress) protein is 1-aminocyclopropane-1-carboxylate synthase 11 (ACS11).